A 325-amino-acid polypeptide reads, in one-letter code: Beta-ketoacyl-[acyl-carrier-protein] synthase III (325 aa).

Catalysis depends on residues Cys113 and His250. Positions 251-255 (QANIR) are ACP-binding. Asn280 is an active-site residue.

Belongs to the thiolase-like superfamily. FabH family. Homodimer.

The protein localises to the cytoplasm. It catalyses the reaction malonyl-[ACP] + acetyl-CoA + H(+) = 3-oxobutanoyl-[ACP] + CO2 + CoA. It participates in lipid metabolism; fatty acid biosynthesis. Its function is as follows. Catalyzes the condensation reaction of fatty acid synthesis by the addition to an acyl acceptor of two carbons from malonyl-ACP. Catalyzes the first condensation reaction which initiates fatty acid synthesis and may therefore play a role in governing the total rate of fatty acid production. Possesses both acetoacetyl-ACP synthase and acetyl transacylase activities. Its substrate specificity determines the biosynthesis of branched-chain and/or straight-chain of fatty acids. The protein is Beta-ketoacyl-[acyl-carrier-protein] synthase III of Streptococcus suis (strain 98HAH33).